The primary structure comprises 618 residues: Methylmalonyl-CoA mutase small subunit (618 aa).

It belongs to the methylmalonyl-CoA mutase family. As to quaternary structure, heterodimer of an alpha and a beta chain. The cofactor is adenosylcob(III)alamin.

It carries out the reaction (R)-methylmalonyl-CoA = succinyl-CoA. It participates in metabolic intermediate metabolism; propanoyl-CoA degradation; succinyl-CoA from propanoyl-CoA: step 3/3. Its function is as follows. Catalyzes the isomerization of succinyl-CoA to methylmalonyl-CoA during synthesis of propionate from tricarboxylic acid-cycle intermediates. This Porphyromonas gingivalis (strain ATCC BAA-308 / W83) protein is Methylmalonyl-CoA mutase small subunit (mutA).